A 234-amino-acid chain; its full sequence is Thymidylate kinase (234 aa).

Position 11 to 18 (11 to 18 (GLEGSGKT)) interacts with ATP.

It belongs to the thymidylate kinase family.

It catalyses the reaction dTMP + ATP = dTDP + ADP. In terms of biological role, phosphorylation of dTMP to form dTDP in both de novo and salvage pathways of dTTP synthesis. The sequence is that of Thymidylate kinase from Wigglesworthia glossinidia brevipalpis.